The following is a 1061-amino-acid chain: Protein pid-5 (1061 aa).

Belongs to the peptidase M24B family. In terms of assembly, may interact with pid-2, app-1 and prmt-5.

It is found in the cytoplasm. It localises to the perinuclear region. The protein resides in the P-body. In terms of biological role, together with pid-4, it is involved in gene silencing mediated by a class of 21 nucleotide PIWI-interacting RNAs (piRNAs) that possess a uracil residue at the 5'-end (also called 21U-RNAs) and guide the Piwi protein prg-1 to its DNA targets for silencing. Together with pid-4, it is required for the biogenesis of secondary and tertiary 22G-siRNAs. Specifically, promotes the production of 22G-siRNAs from the 5' end of target mRNAs. Together with pid-4, plays a role in small RNA-directed transgenerational epigenetic inheritance (also called RNAe) over several generations and germline immortality. Together with pid-4, plays a role in the formation of liquid-like condensates in the cytoplasm called Z granules. In Caenorhabditis elegans, this protein is Protein pid-5.